The sequence spans 393 residues: Dual specificity mitogen-activated protein kinase kinase 1 (393 aa).

The segment at 1-27 is disordered; the sequence is MPKKKPTPIQLNPAPDGSAVNGTSSAE. In terms of domain architecture, Protein kinase spans 68-361; it reads FEKISELGAG…LKQLMVHAFI (294 aa). Residues 74 to 82, lysine 97, 143 to 146, and 150 to 153 contribute to the ATP site; these read LGAGNGGVV, MEHM, and SLDQ. U0126 is bound at residue lysine 97. 144–146 serves as a coordination point for K-252a; that stretch reads EHM. Aspartate 190 functions as the Proton acceptor in the catalytic mechanism. ATP-binding positions include 192-195 and aspartate 208; that span reads KPSN. Serine 194 contributes to the K-252a binding site. 208-211 is a U0126 binding site; that stretch reads DFGV. Phosphoserine; by BRAF and RAF1 occurs at positions 218 and 222. The segment at 270-307 is RAF1-binding; it reads ELELMFGCQVEGDAAETPPRPRTPGRPLSSYGMDSRPP. The residue at position 286 (threonine 286) is a Phosphothreonine. Phosphothreonine; by MAPK1 is present on threonine 292. Serine 298 carries the post-translational modification Phosphoserine; by PAK.

The protein belongs to the protein kinase superfamily. STE Ser/Thr protein kinase family. MAP kinase kinase subfamily. As to quaternary structure, found in a complex with at least BRAF, HRAS, MAP2K1, MAPK3/ERK1 and RGS14. Forms a heterodimer with MAP2K2/MEK2. Forms heterodimers with KSR2 which further dimerize to form tetramers. Interacts with KSR1 or KSR2 and BRAF; the interaction with KSR1 or KSR2 mediates KSR1-BRAF or KSR2-BRAF dimerization. Interacts with ARBB2, LAMTOR3 and RAF1. Interacts with MAPK1/ERK2. Interacts with MORG1. Interacts with PPARG. Interacts with isoform 1 of VRK2. Interacts with SGK1. Interacts with BIRC6/bruce. Interacts with KAT7; the interaction promotes KAT7 phosphorylation. Interacts with RAF1 and NEK10; the interaction is required for ERK1/2-signaling pathway activation in response to UV irradiation. Interacts with TRAF3IP3. Interacts with MOS. (Microbial infection) Interacts with Yersinia YopJ. Post-translationally, phosphorylation at Ser-218 and Ser-222 by MAP kinase kinase kinases (BRAF or MEKK1) positively regulates kinase activity. Also phosphorylated at Thr-292 by MAPK1/ERK2 and at Ser-298 by PAK. MAPK1/ERK2 phosphorylation of Thr-292 occurs in response to cellular adhesion and leads to inhibition of Ser-298 phosphorylation by PAK. Autophosphorylated at Ser-218 and Ser-222, autophosphosphorylation is promoted by NEK10 following UV irradiation. (Microbial infection) Acetylation by Yersinia YopJ prevents phosphorylation and activation, thus blocking the MAPK signaling pathway. Widely expressed, with extremely low levels in brain.

It is found in the cytoplasm. Its subcellular location is the cytoskeleton. The protein resides in the microtubule organizing center. The protein localises to the centrosome. It localises to the spindle pole body. It is found in the nucleus. Its subcellular location is the membrane. The catalysed reaction is L-seryl-[protein] + ATP = O-phospho-L-seryl-[protein] + ADP + H(+). It carries out the reaction L-threonyl-[protein] + ATP = O-phospho-L-threonyl-[protein] + ADP + H(+). The enzyme catalyses L-tyrosyl-[protein] + ATP = O-phospho-L-tyrosyl-[protein] + ADP + H(+). Its activity is regulated as follows. Ras proteins such as HRAS mediate the activation of RAF proteins such as RAF1 or BRAF which in turn activate extracellular signal-regulated kinases (ERK) through MAPK (mitogen-activated protein kinases) and ERK kinases MAP2K1/MEK1 and MAP2K2/MEK2. Activation occurs through phosphorylation of Ser-218 and Ser-222. MAP2K1/MEK1 binds KSR1 or KSR2 releasing the inhibitory intramolecular interaction between KSR1 or KSR2 protein kinase and N-terminal domains. This allows KSR1 or KSR2 dimerization with BRAF leading to BRAF activation and phosphorylation of MAP2K1. MAP2K1/MEK1 is also the target of negative feed-back regulation by its substrate kinases, such as MAPK1/ERK2. These phosphorylate MAP2K1/MEK1 on Thr-292, thereby facilitating dephosphorylation of the activating residues Ser-218 and Ser-222. Inhibited by serine/threonine phosphatase 2A. Many inhibitors have been identified including pyrrole derivatives, TAK-733 (one of a series of 8-methylpyrido[2,3-d]pyrimidine-4,7(3H,8H)-dione derivatives), CH4987655 and RDEA119/BAY 869766. Its function is as follows. Dual specificity protein kinase which acts as an essential component of the MAP kinase signal transduction pathway. Binding of extracellular ligands such as growth factors, cytokines and hormones to their cell-surface receptors activates RAS and this initiates RAF1 activation. RAF1 then further activates the dual-specificity protein kinases MAP2K1/MEK1 and MAP2K2/MEK2. Both MAP2K1/MEK1 and MAP2K2/MEK2 function specifically in the MAPK/ERK cascade, and catalyze the concomitant phosphorylation of a threonine and a tyrosine residue in a Thr-Glu-Tyr sequence located in the extracellular signal-regulated kinases MAPK3/ERK1 and MAPK1/ERK2, leading to their activation and further transduction of the signal within the MAPK/ERK cascade. Activates BRAF in a KSR1 or KSR2-dependent manner; by binding to KSR1 or KSR2 releases the inhibitory intramolecular interaction between KSR1 or KSR2 protein kinase and N-terminal domains which promotes KSR1 or KSR2-BRAF dimerization and BRAF activation. Depending on the cellular context, this pathway mediates diverse biological functions such as cell growth, adhesion, survival and differentiation, predominantly through the regulation of transcription, metabolism and cytoskeletal rearrangements. One target of the MAPK/ERK cascade is peroxisome proliferator-activated receptor gamma (PPARG), a nuclear receptor that promotes differentiation and apoptosis. MAP2K1/MEK1 has been shown to export PPARG from the nucleus. The MAPK/ERK cascade is also involved in the regulation of endosomal dynamics, including lysosome processing and endosome cycling through the perinuclear recycling compartment (PNRC), as well as in the fragmentation of the Golgi apparatus during mitosis. The chain is Dual specificity mitogen-activated protein kinase kinase 1 from Homo sapiens (Human).